Consider the following 87-residue polypeptide: Small ribosomal subunit protein bS20 (87 aa).

Residues 1–20 (MANHKSAEKRARQTIKRTER) are disordered.

Belongs to the bacterial ribosomal protein bS20 family.

Binds directly to 16S ribosomal RNA. This is Small ribosomal subunit protein bS20 from Campylobacter lari (strain RM2100 / D67 / ATCC BAA-1060).